The following is a 64-amino-acid chain: Sulfur carrier protein ThiS (64 aa).

Position 64 is a 1-thioglycine; alternate (Gly64). Position 64 is a glycyl adenylate; alternate (Gly64). A Glycyl cysteine thioester (Gly-Cys) (interchain with C-192 in TtuC); alternate cross-link involves residue Gly64.

It belongs to the sulfur carrier protein ThiS family. Post-translationally, C-terminal thiocarboxylation occurs in 2 steps, it is first acyl-adenylated (-COAMP) by TtuC, then thiocarboxylated (-COSH) by the cysteine desulfurases IscS or SufS.

It functions in the pathway cofactor biosynthesis; thiamine diphosphate biosynthesis. Its function is as follows. Is the sulfur donor in the synthesis of the thiazole phosphate moiety of thiamine phosphate. The polypeptide is Sulfur carrier protein ThiS (Thermus thermophilus (strain ATCC BAA-163 / DSM 7039 / HB27)).